Here is a 299-residue protein sequence, read N- to C-terminus: N-acetylmuramic acid 6-phosphate etherase (299 aa).

An SIS domain is found at 54-217 (TIAQYKKGGR…STITMVGVGK (164 aa)). Glu82 acts as the Proton donor in catalysis. Glu113 is a catalytic residue.

It belongs to the GCKR-like family. MurNAc-6-P etherase subfamily. As to quaternary structure, homodimer.

The enzyme catalyses N-acetyl-D-muramate 6-phosphate + H2O = N-acetyl-D-glucosamine 6-phosphate + (R)-lactate. The protein operates within amino-sugar metabolism; N-acetylmuramate degradation. In terms of biological role, specifically catalyzes the cleavage of the D-lactyl ether substituent of MurNAc 6-phosphate, producing GlcNAc 6-phosphate and D-lactate. The protein is N-acetylmuramic acid 6-phosphate etherase of Staphylococcus aureus (strain USA300).